The sequence spans 740 residues: MERTYPYAWIIPFIPLPVTVLVGLGLLVVPNATKKIRRMWAFISVLLLSIALLFSINISIQQIGGSSIYQYLWSWTINNDFSLEFGYLIDSLTSIMLILITTVGIMVLIYSDNYMSHDQGYLRFFAYLNFFNASMLGLVTSSNLIQIYIFWELVGMCSYLLIGFWFTRPSAANACQKAFVTNRVGDFGLLLGILGLYWITGSFEFRDLFEIFNILVHNNTINLFFAALCASLLFLGAIAKSAQFPLHVWLPDAMEGPTPISALIHAATMVAAGIFLVARLFPLFINLPYIMYFISLIGIITVLLGATLALAQRDIKRSLAYSTMSQLGYIMLAMGIGSYRAALFHLITHAYSKALLFLGSGSIIHSMEPIVGYSPDKSQNMVLMGGLTKYVPITKTTFLLGTLSLCGIPPLACFWSKDEILNDSWLYSPIFAIIAYSTAGLTAFYMFRVYLLTFDGHLRIHFTNLNGAKSRSLYSISIWGKEESNLNNTNCFLSEINKNDEKVFFFSKKTYKIGKYARNRMFSFSIFFGNEIVFPYPHESDSTMLLSVCVLGLFTLFVGFIGIPLNQGIVDFDILSKWLTPSINLLHKNAHYSVDWYEFVINAIFSVSIALFGIFIASFLYGSVFSSFKSLDLINSFETKGKKRIFLDRILNVIYNWSDNRGYIDTLFSLYLTRNIRKLSELTHSFDKRLIDGITNGVGVASFFVGEGFKYVGGGRISSYLFVYLSYVSVFLVVIYYFVL.

Helical transmembrane passes span 9-29, 40-60, 89-109, 125-145, 147-167, 185-205, 219-239, 258-278, 290-310, 327-347, 354-374, 396-416, 425-445, 521-538, 545-565, 599-619, and 720-740; these read WIIPFIPLPVTVLVGLGLLVV, WAFISVLLLSIALLFSINISI, IDSLTSIMLILITTVGIMVLI, FAYLNFFNASMLGLVTSSNLI, IYIFWELVGMCSYLLIGFWFT, GDFGLLLGILGLYWITGSFEF, NTINLFFAALCASLLFLGAIA, TPISALIHAATMVAAGIFLVA, IMYFISLIGIITVLLGATLAL, LGYIMLAMGIGSYRAALFHLI, ALLFLGSGSIIHSMEPIVGYS, TTFLLGTLSLCGIPPLACFWS, WLYSPIFAIIAYSTAGLTAFY, MFSFSIFFGNEIVFPYPH, LLSVCVLGLFTLFVGFIGIPL, FVINAIFSVSIALFGIFIASF, and YLFVYLSYVSVFLVVIYYFVL.

Belongs to the complex I subunit 5 family. As to quaternary structure, NDH is composed of at least 16 different subunits, 5 of which are encoded in the nucleus.

The protein resides in the plastid. It localises to the chloroplast thylakoid membrane. It carries out the reaction a plastoquinone + NADH + (n+1) H(+)(in) = a plastoquinol + NAD(+) + n H(+)(out). The enzyme catalyses a plastoquinone + NADPH + (n+1) H(+)(in) = a plastoquinol + NADP(+) + n H(+)(out). NDH shuttles electrons from NAD(P)H:plastoquinone, via FMN and iron-sulfur (Fe-S) centers, to quinones in the photosynthetic chain and possibly in a chloroplast respiratory chain. The immediate electron acceptor for the enzyme in this species is believed to be plastoquinone. Couples the redox reaction to proton translocation, and thus conserves the redox energy in a proton gradient. This chain is NAD(P)H-quinone oxidoreductase subunit 5, chloroplastic (ndhF), found in Piper cenocladum (Ant piper).